The chain runs to 182 residues: Ribosome maturation factor RimM (182 aa).

The region spanning 103–182 is the PRC barrel domain; that stretch reads EGDYYWKDLM…SIEVDWDPGF (80 aa).

It belongs to the RimM family. As to quaternary structure, binds ribosomal protein uS19.

It localises to the cytoplasm. Functionally, an accessory protein needed during the final step in the assembly of 30S ribosomal subunit, possibly for assembly of the head region. Essential for efficient processing of 16S rRNA. May be needed both before and after RbfA during the maturation of 16S rRNA. It has affinity for free ribosomal 30S subunits but not for 70S ribosomes. The protein is Ribosome maturation factor RimM of Escherichia coli O139:H28 (strain E24377A / ETEC).